We begin with the raw amino-acid sequence, 280 residues long: Succinate dehydrogenase [ubiquinone] iron-sulfur subunit 2, mitochondrial (280 aa).

The transit peptide at 1–28 directs the protein to the mitochondrion; it reads MAFGLIGRVVGTKSSRLSTAARLIPARW. One can recognise a 2Fe-2S ferredoxin-type domain in the interval 51–140; sequence FQIYRWNPDN…ETTITPLPHM (90 aa). [2Fe-2S] cluster is bound by residues cysteine 101, cysteine 106, and cysteine 121. Residues 183–213 enclose the 4Fe-4S ferredoxin-type domain; that stretch reads DRAKLDGMYECILCACCSTSCPSYWWNPESY. Residues cysteine 193, cysteine 196, and cysteine 199 each contribute to the [4Fe-4S] cluster site. Position 203 (cysteine 203) interacts with [3Fe-4S] cluster. Tryptophan 208 contacts a ubiquinone. The [3Fe-4S] cluster site is built by cysteine 250 and cysteine 256. Cysteine 260 contributes to the [4Fe-4S] cluster binding site.

This sequence belongs to the succinate dehydrogenase/fumarate reductase iron-sulfur protein family. In terms of assembly, component of complex II composed of eight subunits in plants: four classical SDH subunits SDH1, SDH2, SDH3 and SDH4 (a flavoprotein (FP), an iron-sulfur protein (IP), and a cytochrome b composed of a large and a small subunit.), as well as four subunits unknown in mitochondria from bacteria and heterotrophic eukaryotes. The cofactor is [2Fe-2S] cluster. [3Fe-4S] cluster is required as a cofactor. Requires [4Fe-4S] cluster as cofactor. Ubiquitous. Preferentially expressed in flowers, inflorescences and root tips.

It is found in the mitochondrion inner membrane. The catalysed reaction is a quinone + succinate = fumarate + a quinol. It participates in carbohydrate metabolism; tricarboxylic acid cycle; fumarate from succinate (eukaryal route): step 1/1. Iron-sulfur protein (IP) subunit of succinate dehydrogenase (SDH) that is involved in complex II of the mitochondrial electron transport chain and is responsible for transferring electrons from succinate to ubiquinone (coenzyme Q). The chain is Succinate dehydrogenase [ubiquinone] iron-sulfur subunit 2, mitochondrial (SDH2-2) from Arabidopsis thaliana (Mouse-ear cress).